Consider the following 103-residue polypeptide: Small ribosomal subunit protein uS10 (103 aa).

The protein belongs to the universal ribosomal protein uS10 family. Part of the 30S ribosomal subunit.

Functionally, involved in the binding of tRNA to the ribosomes. The protein is Small ribosomal subunit protein uS10 of Xylella fastidiosa (strain 9a5c).